The chain runs to 401 residues: Histone acetyltransferase type B subunit 2 (401 aa).

WD repeat units follow at residues E116 to S147, F158 to E189, L206 to D237, K249 to D280, and G293 to D324. The tract at residues D335–D339 is interaction with the histone H4 N-terminus. A WD 6 repeat occupies G350–K381.

This sequence belongs to the WD repeat RBAP46/RBAP48/MSI1 family. In terms of assembly, component of the HAT-B complex composed of at least HAT1 and HAT2. In the cytoplasm, this complex binds to the histone H4 tail. In the nucleus, the HAT-B complex has an additional component, the histone H3/H4 chaperone HIF1.

The protein localises to the cytoplasm. The protein resides in the nucleus. In terms of biological role, regulatory subunit of the histone acetylase B (HAT-B) complex. The complex acetylates 'Lys-12' of histone H4 which is required for telomeric silencing. HAT2 is required for high affinity binding of the acetyltransferase to histone H4, for the nuclear location of HAT1 and for the HAT1-HIF1 interaction. Alone, it is unable to bind to H4, requiring HAT1 for high affinity interaction with the histone tail. HAT2 also has a HAT1 independent function in life-span regulation. The protein is Histone acetyltransferase type B subunit 2 (HAT2) of Saccharomyces cerevisiae (strain ATCC 204508 / S288c) (Baker's yeast).